A 66-amino-acid chain; its full sequence is Disintegrin EO5B (66 aa).

One can recognise a Disintegrin domain in the interval 1–65 (NSAHPCCDPV…DCPRNPYKGK (65 aa)). Intrachain disulfides connect Cys-6/Cys-29, Cys-20/Cys-26, Cys-25/Cys-50, and Cys-38/Cys-57. The Cell attachment site; atypical (VGD) signature appears at 42 to 44 (VGD).

It belongs to the disintegrin family. Dimeric disintegrin subfamily. Heterodimer with EO4A or EO5A; disulfide-linked. Expressed by the venom gland.

It is found in the secreted. In terms of biological role, poor inhibitor of platelet aggregation. When it dimerizes with EO4A, it inhibits the adhesion of cells expressing the RGD-dependent integrin alpha-5/beta-1 (ITGA5/ITGB1) to immobilized fibronectin. When it dimerizes with EO5A, it inhibits the adhesion of the alpha-4/beta-1 (ITGA4/ITGB1) integrin to VCAM-1. When it dimerizes either with EO4A or EO5A, the inhibition on alpha-IIb/beta-3 (ITGA2B/ITGB3) is low. The sequence is that of Disintegrin EO5B from Echis ocellatus (Ocellated saw-scaled viper).